Reading from the N-terminus, the 325-residue chain is DNA-directed RNA polymerase subunit alpha (325 aa).

Residues 1-231 form an alpha N-terminal domain (alpha-NTD) region; that stretch reads MQTSLLKPKI…DQLSVFAALE (231 aa). The segment at 246–325 is alpha C-terminal domain (alpha-CTD); that stretch reads IDPILLRPVD…ENWPPAGLDK (80 aa).

Belongs to the RNA polymerase alpha chain family. In terms of assembly, homodimer. The RNAP catalytic core consists of 2 alpha, 1 beta, 1 beta' and 1 omega subunit. When a sigma factor is associated with the core the holoenzyme is formed, which can initiate transcription.

The enzyme catalyses RNA(n) + a ribonucleoside 5'-triphosphate = RNA(n+1) + diphosphate. Its function is as follows. DNA-dependent RNA polymerase catalyzes the transcription of DNA into RNA using the four ribonucleoside triphosphates as substrates. This Burkholderia thailandensis (strain ATCC 700388 / DSM 13276 / CCUG 48851 / CIP 106301 / E264) protein is DNA-directed RNA polymerase subunit alpha.